The following is a 358-amino-acid chain: C-X-C chemokine receptor type 4 (358 aa).

The important for chemokine binding and signaling stretch occupies residues 1–25 (MDGFSGGIDINIFDSNSTENGSGDF). The Extracellular segment spans residues 1–44 (MDGFSGGIDINIFDSNSTENGSGDFEDFSEPCFMHDNSDFNRIF). N-linked (GlcNAc...) asparagine glycosylation is found at Asn16 and Asn20. 2 disulfide bridges follow: Cys32–Cys281 and Cys113–Cys190. Residues 45 to 67 (LPTIYSFIFLLGIIGNGLVVVVM) traverse the membrane as a helical segment. Over 68–81 (GYQKKSRTMTDKYR) the chain is Cytoplasmic. A helical transmembrane segment spans residues 82–103 (LHLSVADLLFVFTLPFWSVDAA). The chemokine binding stretch occupies residues 98–101 (WSVD). Residues 104 to 114 (IGWYFKEFLCK) lie on the Extracellular side of the membrane. A helical transmembrane segment spans residues 115–134 (AVHVIYTVNLYSSVLILAFI). A chemokine binding region spans residues 117 to 121 (HVIYT). Residues 135-158 (SLDRYLAIVHATNSQGSRKMLADK) lie on the Cytoplasmic side of the membrane. The segment at 139–151 (YLAIVHATNSQGS) is involved in dimerization; when bound to chemokine. A helical membrane pass occupies residues 159-178 (VVYAGVWLPALLLTVPDLVF). Over 179–202 (ARVSDENGQFVCDRIYPIDNRETW) the chain is Extracellular. Residues 190-194 (CDRIY) are chemokine binding, important for signaling. The chain crosses the membrane as a helical span at residues 203–223 (TVGFRFLHITVGLILPGLIIL). The Cytoplasmic segment spans residues 224 to 248 (ICYCVIISKLSHSKGHQKRKALKTT). A helical membrane pass occupies residues 249–268 (VILILAFFACWLPYYVCLTT). Residues 269–289 (DTFMLLGLLKADCIWENTLHK) are Extracellular-facing. Residues 290–309 (AISITEALAFFHCCLNPILY) traverse the membrane as a helical segment. Residues 310-358 (AFLGAKFKTSAQNAFTSVSRGSSLKILSKKRAGLSSVSTESESSSFHSS) lie on the Cytoplasmic side of the membrane. Residues 338 to 358 (KKRAGLSSVSTESESSSFHSS) are disordered. The span at 344 to 358 (SSVSTESESSSFHSS) shows a compositional bias: low complexity.

It belongs to the G-protein coupled receptor 1 family. Monomer. Can form dimers. In terms of processing, sulfation is required for efficient binding of cxcl12/sdf-1alpha and promotes its dimerization. O- and N-glycosylated.

The protein localises to the cell membrane. Its subcellular location is the cytoplasm. It is found in the nucleus. It localises to the early endosome. The protein resides in the late endosome. The protein localises to the lysosome. Functionally, receptor for the C-X-C chemokine cxcl12/sdf-1. Transduces a signal by increasing the intracellular calcium ion level. Signaling with cxcl12/sdf-1 mediates the directional movement of mesodermal cells during gastrulation. May play a role in the migration of embryonic presumptive primordial germ cells (pPGCs). May also be involved in regulating migration of hematopoietic stem cells into the larval liver. The chain is C-X-C chemokine receptor type 4 from Xenopus tropicalis (Western clawed frog).